Here is a 348-residue protein sequence, read N- to C-terminus: MTKPYGSSLDDHLDAEVAREPSLADTAATIRALAAAAIDVSETVGRGSLAGDLAAQGEHNSDGDVQKALDVIAHKRFMQALEEAPVAQVASEEAEDVVTLKAGAPLAVAIDPLDGSSNIGVGMVVGTIFGIRPVTPGEDPNASFLTPGTTQTAAGFVVYGPATTFVVTLGNGTRIFTLDRTDNVFRLTHDAMKIVPSASEYAINASNVRHWDGPVKSYIEDCLRGSEGPRDRDFNMRWTAALVADAQRVLIRGGVFLYPGDNRKGYAQGRLRLLYETAPIAFLIEQAGGGATDGQGRILERVATKIHERSPLVFGSTEEVECVAKYYDGRQPSAGRSPLFGQRGLMRS.

4 residues coordinate Mg(2+): E92, D111, L113, and D114. Substrate is bound by residues D114–S117 and N204. E276 serves as a coordination point for Mg(2+).

The protein belongs to the FBPase class 1 family. As to quaternary structure, homotetramer. Mg(2+) serves as cofactor.

It localises to the cytoplasm. It catalyses the reaction beta-D-fructose 1,6-bisphosphate + H2O = beta-D-fructose 6-phosphate + phosphate. Its pathway is carbohydrate biosynthesis; gluconeogenesis. This is Fructose-1,6-bisphosphatase class 1 from Methylorubrum extorquens (strain CM4 / NCIMB 13688) (Methylobacterium extorquens).